A 448-amino-acid chain; its full sequence is Glucan 1,3-beta-glucosidase I/II (448 aa).

An N-terminal signal peptide occupies residues 1–19 (MLSLKTLLCTLLTVSSVLA). Positions 20 to 40 (TPVPARDPSSIQFVHEENKKR) are excised as a propeptide. Asparagine 165 carries N-linked (GlcNAc...) asparagine glycosylation. The active-site Proton donor is glutamate 232. The N-linked (GlcNAc...) asparagine glycan is linked to asparagine 325. Glutamate 334 acts as the Nucleophile in catalysis.

Belongs to the glycosyl hydrolase 5 (cellulase A) family.

Its subcellular location is the secreted. It localises to the cell wall. The catalysed reaction is Successive hydrolysis of beta-D-glucose units from the non-reducing ends of (1-&gt;3)-beta-D-glucans, releasing alpha-glucose.. Functionally, glucanases possibly play a role in cell expansion during growth, in cell-cell fusion during mating, and in spore release during sporulation. This enzyme hydrolyzes both 1,3-beta- and 1,6-beta-linkages and even has beta-glucosidase activity. It could also function biosynthetically as a transglycosylase. This Saccharomyces cerevisiae (strain ATCC 204508 / S288c) (Baker's yeast) protein is Glucan 1,3-beta-glucosidase I/II (EXG1).